Reading from the N-terminus, the 510-residue chain is MDIRAAEISAILKDQIKNFGKEAEVSEVGQVLSVGDGIARVYGLDNIQAGEMVEFENGTRGMALNLETDNVGIVIFGADREIKEGQTVKRTRAIVDAPVGKGLLGRVVDALGNPIDGKGPIQGAERKRVDVKAPGIIPRKSVHEPMATGLKAIDALIPIGRGQRELIIGDRQTGKTAIALDTILNQKPLNVAGAPESQKLYCVYVAVGQKRSTVAQFVKVLEEQGALEYSIVVAATASDPAPMQYLAPFTGCTMGEYFRDNAMHAVIIYDDLSKQAVAYRQMSLLLRRPPGREAYPGDVFYLHSRLLERAAKLNDSQGNGSLTALPVIETQANDVSAYIPTNVISITDGQIFLETDLFFQGIRPAVNVGLSVSRVGSSAQTKAMKKVAGKIKGELAQYREMAAFAQFGSDLDASTQRLLNRGSRLTELLKQPQFSPLKMEEQVVVIWAGTNGYLDPLPLGKVRAFEDGLLSLLRGQHADILNTIRDTRDLSDETAGKLKSIVEGYAKTFA.

Residue 169-176 coordinates ATP; the sequence is GDRQTGKT.

The protein belongs to the ATPase alpha/beta chains family. F-type ATPases have 2 components, CF(1) - the catalytic core - and CF(0) - the membrane proton channel. CF(1) has five subunits: alpha(3), beta(3), gamma(1), delta(1), epsilon(1). CF(0) has three main subunits: a(1), b(2) and c(9-12). The alpha and beta chains form an alternating ring which encloses part of the gamma chain. CF(1) is attached to CF(0) by a central stalk formed by the gamma and epsilon chains, while a peripheral stalk is formed by the delta and b chains.

It localises to the cell inner membrane. It catalyses the reaction ATP + H2O + 4 H(+)(in) = ADP + phosphate + 5 H(+)(out). In terms of biological role, produces ATP from ADP in the presence of a proton gradient across the membrane. The alpha chain is a regulatory subunit. The chain is ATP synthase subunit alpha from Nitrobacter winogradskyi (strain ATCC 25391 / DSM 10237 / CIP 104748 / NCIMB 11846 / Nb-255).